Consider the following 546-residue polypeptide: Chaperonin GroEL 1 (546 aa).

ATP is bound by residues 30–33, K51, 87–91, G415, 479–481, and D495; these read TLGP, DGTTT, and NAA. The segment at 526–546 is disordered; that stretch reads KEDAPMPGGMPGGMGGMGMDM. Gly residues predominate over residues 534-546; the sequence is GMPGGMGGMGMDM.

Belongs to the chaperonin (HSP60) family. As to quaternary structure, forms a cylinder of 14 subunits composed of two heptameric rings stacked back-to-back. Interacts with the co-chaperonin GroES.

The protein localises to the cytoplasm. The catalysed reaction is ATP + H2O + a folded polypeptide = ADP + phosphate + an unfolded polypeptide.. Its function is as follows. Together with its co-chaperonin GroES, plays an essential role in assisting protein folding. The GroEL-GroES system forms a nano-cage that allows encapsulation of the non-native substrate proteins and provides a physical environment optimized to promote and accelerate protein folding. The chain is Chaperonin GroEL 1 from Burkholderia pseudomallei (strain K96243).